The following is a 364-amino-acid chain: GDSL esterase/lipase At1g29660 (364 aa).

The N-terminal stretch at 1–26 (MESYLRKWCLVSVWVLLLGLGFKVKA) is a signal peptide. Residue serine 39 is the Nucleophile of the active site. Catalysis depends on charge relay system residues aspartate 328 and histidine 331.

It belongs to the 'GDSL' lipolytic enzyme family. As to expression, found in phloem exudates.

The protein localises to the secreted. Its subcellular location is the extracellular space. The protein resides in the apoplast. Functionally, involved in EDS1-dependent systemic acquired resistance, maybe in phloem-mediated long-distance signaling. This is GDSL esterase/lipase At1g29660 from Arabidopsis thaliana (Mouse-ear cress).